Here is a 289-residue protein sequence, read N- to C-terminus: Shikimate dehydrogenase (NADP(+)) (289 aa).

Residues 22-24 (SRS) and Thr69 each bind shikimate. Lys73 (proton acceptor) is an active-site residue. Position 85 (Glu85) interacts with NADP(+). Shikimate contacts are provided by Asn94 and Asp109. NADP(+)-binding positions include 134–138 (GAGGA), 158–163 (NRTLSR), and Ile226. Tyr228 lines the shikimate pocket. Gly249 provides a ligand contact to NADP(+).

The protein belongs to the shikimate dehydrogenase family. As to quaternary structure, homodimer.

The enzyme catalyses shikimate + NADP(+) = 3-dehydroshikimate + NADPH + H(+). The protein operates within metabolic intermediate biosynthesis; chorismate biosynthesis; chorismate from D-erythrose 4-phosphate and phosphoenolpyruvate: step 4/7. Involved in the biosynthesis of the chorismate, which leads to the biosynthesis of aromatic amino acids. Catalyzes the reversible NADPH linked reduction of 3-dehydroshikimate (DHSA) to yield shikimate (SA). The polypeptide is Shikimate dehydrogenase (NADP(+)) (Brucella ovis (strain ATCC 25840 / 63/290 / NCTC 10512)).